Reading from the N-terminus, the 540-residue chain is IQ motif and ankyrin repeat domain-containing protein 1 (540 aa).

Over residues 1–17 (MSTKKGGPKAASGKGQA) the composition is skewed to low complexity. The segment at 1–62 (MSTKKGGPKA…PQAPAAPTAE (62 aa)) is disordered. The IQ domain maps to 62–91 (EDKAAIVIQCAFRQYLARRELARRCQERQE). ANK repeat units follow at residues 191–220 (HGNT…NPNT) and 224–253 (FGRT…DPRM). The stretch at 281-388 (LTEAMLKNME…EETLAMARLE (108 aa)) forms a coiled coil.

The protein is IQ motif and ankyrin repeat domain-containing protein 1 of Mus musculus (Mouse).